The chain runs to 123 residues: UPF0102 protein Fjoh_1217 (123 aa).

It belongs to the UPF0102 family.

The chain is UPF0102 protein Fjoh_1217 from Flavobacterium johnsoniae (strain ATCC 17061 / DSM 2064 / JCM 8514 / BCRC 14874 / CCUG 350202 / NBRC 14942 / NCIMB 11054 / UW101) (Cytophaga johnsonae).